Consider the following 130-residue polypeptide: Small ribosomal subunit protein uS9 (130 aa).

Belongs to the universal ribosomal protein uS9 family.

The sequence is that of Small ribosomal subunit protein uS9 from Herminiimonas arsenicoxydans.